A 95-amino-acid chain; its full sequence is MKAYEVLYVIRPDLDDEAVAATVDKLSEVVTNNGGADVAIDKWGKRRLAYEVNDYREGFYILMNFNGEARTAQEVERIMKISDAVVRFLTTKKED.

This sequence belongs to the bacterial ribosomal protein bS6 family.

Functionally, binds together with bS18 to 16S ribosomal RNA. The protein is Small ribosomal subunit protein bS6 of Desulfitobacterium hafniense (strain DSM 10664 / DCB-2).